Reading from the N-terminus, the 364-residue chain is C2 calcium-dependent domain-containing protein 4A (364 aa).

Disordered stretches follow at residues Gly118–Cys175 and Ala192–Arg242. Residues Ser220–Ser233 are compositionally biased toward polar residues. The C2 domain occupies Ala254–Leu364.

Belongs to the C2CD4 family.

The protein localises to the nucleus. May be involved in inflammatory process. May regulate cell architecture and adhesion. In Bos taurus (Bovine), this protein is C2 calcium-dependent domain-containing protein 4A (C2CD4A).